Consider the following 271-residue polypeptide: Homeobox protein pal-1 (271 aa).

3 disordered regions span residues methionine 1–asparagine 25, proline 100–serine 135, and glycine 178–valine 202. Low complexity-rich tracts occupy residues proline 100–proline 117 and serine 125–serine 135. Positions aspartate 189 to valine 202 are enriched in polar residues. A DNA-binding region (homeobox) is located at residues alanine 207 to lysine 266.

It belongs to the Caudal homeobox family. In terms of assembly, interacts with tir-1 and let-756.

It is found in the nucleus. The protein localises to the chromosome. The protein resides in the centromere. It localises to the kinetochore. Functionally, transcriptional activator. Interacts with promoter regions for tbx-8.9, tbx-9, elt-1, hnd-1, scrt-1, and vab-7 genes. Binds the sequence ATTTATGAC. Binds to the enhancer region of the hlh-1 gene promoter during embryonic body wall muscle development. Activates the gene for mab-5 in embryo development. Necessary for vab-7 expression in C blastomeres in the posterior of embryos. Required for posterior V6 neuroectoblast cell fate specification during postembryonic neurogenesis (patterning) which generates the characteristic ray lineage during male tail development. Binds to ced-3 promoter and activated expression which is crucial for tail-spike cell death. Has a role in E cell specification in endoderm development and body wall muscle development. This Caenorhabditis briggsae protein is Homeobox protein pal-1.